Reading from the N-terminus, the 442-residue chain is MHVLTPSLYIYAFFIVCVRLKCGRSKRVANAKHATYDMPPKGLRVRDMLEKTAQQNCNQRKRGKCRKFFFLWKMDKMGDTHLGGQANGRKNLLRSESATDEASLGGNPLKEKLKESPANWGKDKQEEQQSTDRLPLPKVGNKMPEKKPDWFHVPAPTGKKYNELKADLKKLKLHTVCEEAQCPNIGECWNIGTATIMLLGDTCTRGCKFCSIKTSSKPLPPDANEPFNTAKAICEWDINYVVLTSVDRDDLPDGGASHFAKTIELIKFSRPEILIECLVSDFQGNVDSIRKLANSGMEVYAHNIETVRRLQKFVRDRRANYEQSLWVLKTAKEINPLLYTKTSIMLGLGETKQEVLQAMADVRQNNIDVITFGQYLRPTKNHLNVVEYVSPQMFDYYKEEGMKMGFKYIASGPLVRSSYKAGEYFMKNLVEQRRGVKLHAEG.

Residues 1-25 (MHVLTPSLYIYAFFIVCVRLKCGRS) form the signal peptide. A disordered region spans residues 92–154 (LLRSESATDE…EKKPDWFHVP (63 aa)). Positions 109 to 127 (LKEKLKESPANWGKDKQEE) are enriched in basic and acidic residues. [4Fe-4S] cluster is bound by residues Cys177, Cys182, Cys188, Cys203, Cys207, Cys210, and Ser418. The Radical SAM core domain maps to 189-407 (WNIGTATIML…KEEGMKMGFK (219 aa)).

Belongs to the radical SAM superfamily. Lipoyl synthase family. Requires [4Fe-4S] cluster as cofactor.

The protein resides in the plastid. Its subcellular location is the apicoplast. The enzyme catalyses [[Fe-S] cluster scaffold protein carrying a second [4Fe-4S](2+) cluster] + N(6)-octanoyl-L-lysyl-[protein] + 2 oxidized [2Fe-2S]-[ferredoxin] + 2 S-adenosyl-L-methionine + 4 H(+) = [[Fe-S] cluster scaffold protein] + N(6)-[(R)-dihydrolipoyl]-L-lysyl-[protein] + 4 Fe(3+) + 2 hydrogen sulfide + 2 5'-deoxyadenosine + 2 L-methionine + 2 reduced [2Fe-2S]-[ferredoxin]. It functions in the pathway protein modification; protein lipoylation via endogenous pathway; protein N(6)-(lipoyl)lysine from octanoyl-[acyl-carrier-protein]: step 2/2. Catalyzes the radical-mediated insertion of two sulfur atoms into the C-6 and C-8 positions of the octanoyl moiety bound to the lipoyl domains of lipoate-dependent enzymes, thereby converting the octanoylated domains into lipoylated derivatives. This Plasmodium vivax (strain Salvador I) protein is Lipoyl synthase, apicoplast.